We begin with the raw amino-acid sequence, 136 residues long: MVNDTISDMLTRIRNASMVKKSTVLIPFTKMNQKIAQILEKEGFIQSFFLEEDSKMLVLKFKYRSKKTSNAKTKESCITNLKRISKPGLRIYTNSQDIPRVLGGAGILILSTSVGILTDREARALGVGGEILCSIW.

Belongs to the universal ribosomal protein uS8 family. Part of the 30S ribosomal subunit.

The protein resides in the plastid. The protein localises to the chloroplast. One of the primary rRNA binding proteins, it binds directly to 16S rRNA central domain where it helps coordinate assembly of the platform of the 30S subunit. This chain is Small ribosomal subunit protein uS8c (rps8), found in Tetradesmus obliquus (Green alga).